The following is a 377-amino-acid chain: Nucleoside diphosphate kinase homolog 7 (377 aa).

A DM10 domain is found at 3-91 (HSERFVFIAE…YTARQLGSKK (89 aa)).

The protein belongs to the NDK family. As to quaternary structure, component of sperm flagellar doublet microtubules. Component of the gamma-tubulin ring complex. As to expression, expressed in trachea multiciliated cells.

It is found in the cytoplasm. The protein localises to the cytoskeleton. The protein resides in the microtubule organizing center. It localises to the centrosome. Its subcellular location is the nucleus. It is found in the spindle. The protein localises to the cilium axoneme. The protein resides in the flagellum axoneme. It localises to the cell projection. Its subcellular location is the cilium. Functionally, possesses an intrinsic kinase activity. Displays 3'-5' exonuclease activity with a preference for single-stranded DNA. Does not seem to have nucleoside diphosphate kinase activity. Functional component of the gamma-tubulin ring complex, implicated in the regulation of the microtubule-nucleating activity of the gamma-tubulin ring complex in centrosomes, in a kinase activity-dependent manner. Part of the dynein-decorated doublet microtubules (DMTs) in cilia axoneme, which is required for motile cilia beating. This Bos taurus (Bovine) protein is Nucleoside diphosphate kinase homolog 7 (NME7).